The sequence spans 1219 residues: Polyamine-transporting ATPase 13A3 (1219 aa).

Topologically, residues 1 to 28 (MDKEERKTINKGQEDEMEIHGYNLCRWK) are cytoplasmic. Residues 29 to 49 (LAMVFVGVICTGGFLLLLLYW) lie within the membrane without spanning it. Residues 50–201 (LPEWRVKATC…IAVKVPSVFK (152 aa)) are Cytoplasmic-facing. The helical transmembrane segment at 202–222 (LLIKEVLNPFYIFQLFSVILW) threads the bilayer. The Lumenal segment spans residues 223-228 (SVDEYY). Residues 229-249 (YYALAIVIMSVVSIISSLYSI) traverse the membrane as a helical segment. Residues 250 to 405 (RKQYVMLHDM…KPTDFKLYRD (156 aa)) lie on the Cytoplasmic side of the membrane. Residues 406-426 (AYLFLLCLVVVAGIGFIYTII) form a helical membrane-spanning segment. The Lumenal portion of the chain corresponds to 427–444 (NSILNEKEVQEIIIKSLD). A helical transmembrane segment spans residues 445 to 465 (IITITVPPALPAAMTAGIVYA). The Cytoplasmic segment spans residues 466-936 (QRRLKKVGIF…ALMTSFCVFK (471 aa)). Residue D494 is the 4-aspartylphosphate intermediate of the active site. D494 and T496 together coordinate Mg(2+). Residues 494–496 (DKT), F624, R680, and D746 each bind ATP. S813 carries the post-translational modification Phosphoserine. Mg(2+) contacts are provided by D879 and D883. Residue 879-883 (DGAND) coordinates ATP. Residues 937-957 (FMALYSIIQYFSVTLLYSILS) traverse the membrane as a helical segment. N958 is a topological domain (lumenal). The helical transmembrane segment at 959-979 (LGDFQFLFIDLAIILVVVFTM) threads the bilayer. Over 980 to 995 (SLNPAWKELVAQRPPS) the chain is Cytoplasmic. Residues 996–1016 (GLISGALLFSVLSQIVISVGF) traverse the membrane as a helical segment. Topologically, residues 1017–1066 (QSLGFFWVKQYKVCDPNSDVCNTTRSACWNSSHLYNGTELDSCKIQNYEN) are lumenal. A helical membrane pass occupies residues 1067 to 1087 (TTVFFISSFQYLTVAVAFSKG). The Cytoplasmic portion of the chain corresponds to 1088 to 1098 (KPFRQPCYKNY). The helical transmembrane segment at 1099–1119 (FFVISVIILYVFILFIMLHPV) threads the bilayer. The Lumenal segment spans residues 1120–1136 (ASVDQVLEIMCVPYQWR). A helical membrane pass occupies residues 1137-1157 (IYMLIIVLINAFVSITVEESV). Over 1158–1219 (DRWGKCCLSW…NGSCQIITIA (62 aa)) the chain is Cytoplasmic.

This sequence belongs to the cation transport ATPase (P-type) (TC 3.A.3) family. Type V subfamily. As to expression, expression is greatest in liver, followed by kidney, colon, stomach, brain and small intestine. Isoform 1 is highly expressed in the kidney while isoform 2 is highly expressed in the brain.

It localises to the recycling endosome membrane. The protein localises to the early endosome membrane. The protein resides in the late endosome membrane. It catalyses the reaction putrescine(out) + ATP + H2O = putrescine(in) + ADP + phosphate + H(+). ATP-driven pump involved in endocytosis-dependent polyamine transport. Uses ATP as an energy source to transfer polyamine precursor putrescine from the endosomal compartment to the cytosol. The sequence is that of Polyamine-transporting ATPase 13A3 from Mus musculus (Mouse).